The following is a 338-amino-acid chain: Ketol-acid reductoisomerase (NADP(+)) (338 aa).

In terms of domain architecture, KARI N-terminal Rossmann spans 1–181 (MQVYYDKDCD…GGGRTGIIET (181 aa)). Residues 24–27 (YGSQ), Arg47, Ser50, Ser52, and 82–85 (DEFQ) each bind NADP(+). The active site involves His107. Gly133 is an NADP(+) binding site. Residues 182 to 327 (TFKDETETDL…EKLRGMMPWI (146 aa)) enclose the KARI C-terminal knotted domain. 4 residues coordinate Mg(2+): Asp190, Glu194, Glu226, and Glu230. Ser251 serves as a coordination point for substrate.

Belongs to the ketol-acid reductoisomerase family. It depends on Mg(2+) as a cofactor.

It catalyses the reaction (2R)-2,3-dihydroxy-3-methylbutanoate + NADP(+) = (2S)-2-acetolactate + NADPH + H(+). It carries out the reaction (2R,3R)-2,3-dihydroxy-3-methylpentanoate + NADP(+) = (S)-2-ethyl-2-hydroxy-3-oxobutanoate + NADPH + H(+). Its pathway is amino-acid biosynthesis; L-isoleucine biosynthesis; L-isoleucine from 2-oxobutanoate: step 2/4. The protein operates within amino-acid biosynthesis; L-valine biosynthesis; L-valine from pyruvate: step 2/4. In terms of biological role, involved in the biosynthesis of branched-chain amino acids (BCAA). Catalyzes an alkyl-migration followed by a ketol-acid reduction of (S)-2-acetolactate (S2AL) to yield (R)-2,3-dihydroxy-isovalerate. In the isomerase reaction, S2AL is rearranged via a Mg-dependent methyl migration to produce 3-hydroxy-3-methyl-2-ketobutyrate (HMKB). In the reductase reaction, this 2-ketoacid undergoes a metal-dependent reduction by NADPH to yield (R)-2,3-dihydroxy-isovalerate. The chain is Ketol-acid reductoisomerase (NADP(+)) from Alcanivorax borkumensis (strain ATCC 700651 / DSM 11573 / NCIMB 13689 / SK2).